Reading from the N-terminus, the 558-residue chain is Ankyrin repeat protein OPG189 (558 aa).

ANK repeat units lie at residues 65–95 (YGEN…NINK), 169–205 (YGCT…DVDK), 209–239 (YGNT…NIDS), 243–272 (NRYT…NVNA), 276–304 (FGTT…ELEI), 339–368 (YNET…DFET), and 372–401 (SGCT…SLKI).

This sequence belongs to the orthopoxvirus OPG189 protein family.

Its function is as follows. Contributes to viral release without involving rearrangement of host actin. This is Ankyrin repeat protein OPG189 (OPG189) from Vaccinia virus (strain Western Reserve) (VACV).